The primary structure comprises 287 residues: Aromatic amino acid exporter YddG (287 aa).

Residues Met-1–Ser-5 lie on the Cytoplasmic side of the membrane. Residues Ala-6–Thr-24 traverse the membrane as a helical segment. Positions Thr-7–Leu-136 constitute an EamA 1 domain. Residues Ser-25–Pro-31 are Periplasmic-facing. The chain crosses the membrane as a helical span at residues Pro-32–Arg-54. The Cytoplasmic segment spans residues Gly-55 to Trp-65. The chain crosses the membrane as a helical span at residues Pro-66–Leu-86. Topologically, residues Lys-87–Pro-90 are periplasmic. The helical transmembrane segment at Pro-91–Phe-111 threads the bilayer. Topologically, residues Leu-112–Arg-118 are cytoplasmic. Residues Pro-119–Arg-139 traverse the membrane as a helical segment. At Ala-140 to Tyr-149 the chain is on the periplasmic side. A helical membrane pass occupies residues Val-150–Ser-170. Residues Pro-151 to Ala-281 form the EamA 2 domain. Topologically, residues Arg-171–Val-176 are cytoplasmic. Residues Pro-177 to Leu-198 traverse the membrane as a helical segment. Residues Phe-199–Ser-208 lie on the Periplasmic side of the membrane. The helical transmembrane segment at Glu-209–Lys-233 threads the bilayer. The Cytoplasmic portion of the chain corresponds to Arg-234–Asp-236. The chain crosses the membrane as a helical span at residues Val-237–Ala-258. Residues Gly-259 to Ser-264 lie on the Periplasmic side of the membrane. A helical membrane pass occupies residues Gly-265–Leu-284. The Cytoplasmic portion of the chain corresponds to Ala-285 to Arg-287.

The protein belongs to the drug/metabolite transporter (DMT) superfamily. Aromatic amino acid/paraquat exporter (ArAA/P-E) (TC 2.A.7.17) family.

The protein resides in the cell inner membrane. The catalysed reaction is L-threonine(in) = L-threonine(out). The enzyme catalyses L-methionine(in) = L-methionine(out). It carries out the reaction L-lysine(in) = L-lysine(out). It catalyses the reaction L-glutamate(out) = L-glutamate(in). Amino acid transporter with broad substrate specificity. Can transport various amino acids, including L-threonine, L-methionine, L-lysine and L-glutamate. In Ancylobacter novellus (strain ATCC 8093 / DSM 506 / JCM 20403 / CCM 1077 / IAM 12100 / NBRC 12443 / NCIMB 10456) (Starkeya novella), this protein is Aromatic amino acid exporter YddG.